The following is a 677-amino-acid chain: Protein hook (677 aa).

The 118-residue stretch at 6–123 (NEMYYSLLEW…RLLQLVLGCA (118 aa)) folds into the Calponin-homology (CH) domain. 2 coiled-coil regions span residues 135–436 (EIMC…KCGH) and 478–588 (QTAL…AKEV).

Belongs to the hook family. Homodimer. Interacts with microtubules via its N-terminus.

Its subcellular location is the cytoplasm. The protein localises to the cytoskeleton. The protein resides in the endosome. It localises to the synapse. Involved in endocytic trafficking by stabilizing organelles of the endocytic pathway. Probably acts as a cytoskeletal linker protein required to tether endosome vesicles to the cytoskeleton. Involved in modulation of endocytosis at stages required for down-regulation of membrane proteins that control synapse size. Not involved in synaptic vesicle recycling. Required in R7 cells for boss endocytosis into multivesicular bodies (MVBs). Has a role in regulating adult longevity. The protein is Protein hook of Drosophila persimilis (Fruit fly).